Here is a 562-residue protein sequence, read N- to C-terminus: Putative transport protein ECA2683 (562 aa).

A run of 6 helical transmembrane segments spans residues 8 to 28 (LLNG…LCLG), 32 to 52 (LGPV…LLGQ), 66 to 86 (FMLF…SIFF), 93 to 113 (FMLA…LGKL), 116 to 136 (WGIG…PVLV), and 158 to 178 (HLSL…IFGA). RCK C-terminal domains lie at 202–288 (LDVD…NFRD) and 290–373 (KEVF…RIGF). The next 5 helical transmembrane spans lie at 383 to 403 (LLAF…TIQF), 406 to 426 (FTFG…LGFL), 447 to 467 (FGLM…INSS), 478 to 498 (SGLI…AYVL), and 537 to 557 (GTYA…VVIW).

This sequence belongs to the AAE transporter (TC 2.A.81) family. YbjL subfamily.

The protein localises to the cell membrane. The chain is Putative transport protein ECA2683 from Pectobacterium atrosepticum (strain SCRI 1043 / ATCC BAA-672) (Erwinia carotovora subsp. atroseptica).